Reading from the N-terminus, the 499-residue chain is Neuronal acetylcholine receptor subunit alpha-3 (499 aa).

An N-terminal signal peptide occupies residues methionine 1 to alanine 25. Over serine 26–isoleucine 244 the chain is Extracellular. 2 N-linked (GlcNAc...) asparagine glycosylation sites follow: asparagine 49 and asparagine 166. 2 cysteine pairs are disulfide-bonded: cysteine 153/cysteine 167 and cysteine 217/cysteine 218. The helical transmembrane segment at proline 245–proline 260 threads the bilayer. Topologically, residues serine 261 to aspartate 262 are cytoplasmic. The helical transmembrane segment at cysteine 263–valine 279 threads the bilayer. A Na(+)-binding site is contributed by glutamate 265. The Extracellular segment spans residues phenylalanine 280 to tyrosine 301. The chain crosses the membrane as a helical span at residues leucine 302–leucine 320. Residues asparagine 321 to valine 468 are Cytoplasmic-facing. A phosphoserine mark is found at serine 407 and serine 410. A helical membrane pass occupies residues isoleucine 469–glycine 487. Residues leucine 488–threonine 499 are Extracellular-facing.

It belongs to the ligand-gated ion channel (TC 1.A.9) family. Acetylcholine receptor (TC 1.A.9.1) subfamily. Alpha-3/CHRNA3 sub-subfamily. In terms of assembly, neuronal AChR is composed of two different types of subunits: alpha and beta. CHRNA3/Alpha-3 subunit can be combined to CHRNB2/beta-2 or CHRNB4/beta-4 to give rise to functional receptors. Part of a complex composed of STUB1/CHIP, VCP/p97, CHRNA3, and UBXN2A that modulates the ubiquitination and endoplasmic reticulum-associated degradation (ERAD) of CHRNA3. Within the complex UBXN2A acts as a scaffold protein required for the interaction of CHRNA3 with VCP/p97, this interaction also inhibits CHRNA3 ubiquitination by STUB1/CHIP and subsequently ERAD. Interacts with UBXN2A (via SEP domain), the interaction is required for the interaction of CHRNA3 in the STUB1:VCP:UBXN2A complex. Interacts with RIC3; which is required for proper folding and assembly. Post-translationally, ubiquitinated; by STUB1/CHIP and thereafter degraded by the 26S proteosome complex. In terms of tissue distribution, expressed in neurons. Expressed in umbrella cells of urothelium (at protein level).

It localises to the synaptic cell membrane. Its subcellular location is the cell membrane. The protein resides in the endoplasmic reticulum. It is found in the golgi apparatus. It catalyses the reaction Ca(2+)(in) = Ca(2+)(out). It carries out the reaction K(+)(in) = K(+)(out). The catalysed reaction is Na(+)(in) = Na(+)(out). Its activity is regulated as follows. Activated by a myriad of ligands such as acetylcholine, cytisine, nicotine, choline and epibatidine. The heteropentamer CHRNA3:CHRNB2 activity is blocked by alpha-conotoxins ImI, ImII, PnIA, GID and MII. The heteropentamer CHRNA3:CHRNB4 activity is blocked by the alpha-conotoxin ImI and AuIB. Its function is as follows. Component of neuronal acetylcholine receptors (nAChRs) that function as pentameric, ligand-gated cation channels with high calcium permeability among other activities. nAChRs are excitatory neurotrasnmitter receptors formed by a collection of nAChR subunits known to mediate synaptic transmission in the nervous system and the neuromuscular junction. Each nAchR subunit confers differential attributes to channel properties, including activation, deactivation and desensitization kinetics, pH sensitivity, cation permeability, and binding to allosteric modulators. CHRNA3 forms heteropentameric neuronal acetylcholine receptors with CHRNB2 and CHRNB4. CHRNA3:CHRNB4 being predominant in neurons of the autonomic ganglia, it is known as ganglionic nicotinic receptor. CHRNA3:CHRNB4 also plays an important role in the habenulo-interpeduncular tract, modulating the mesolimbic dopamine system and affecting reward circuits and addiction. Hypothalamic CHRNA3:CHRNB4 nAChR activation by nicotine leads to activation of POMC neurons and a decrease in food intake. Also expressed in the urothelium where it modulates reflex bladder activity by increasing intracellular calcium through extracellular influx and basal ATP release. This Rattus norvegicus (Rat) protein is Neuronal acetylcholine receptor subunit alpha-3 (Chrna3).